The primary structure comprises 423 residues: G-protein coupled receptor 83 (423 aa).

A signal peptide spans 1–17 (MKVPPVLLLFLLSSVRA). At 18 to 71 (TEQPQVVTEHPSMEAALTGPNASSHFWANYTFSDWQNFVGRRRYGAESQNPTVK) the chain is on the extracellular side. N38 and N46 each carry an N-linked (GlcNAc...) asparagine glycan. Residues 72–92 (ALLIVAYSFTIVFSLFGNVLV) traverse the membrane as a helical segment. The Cytoplasmic portion of the chain corresponds to 93 to 107 (CHVIFKNQRMHSATS). A helical transmembrane segment spans residues 108 to 129 (LFIVNLAVADIMITLLNTPFTL). Over 130–145 (VRFVNSTWVFGKGMCH) the chain is Extracellular. The N-linked (GlcNAc...) asparagine glycan is linked to N134. Cysteines 144 and 224 form a disulfide. A helical membrane pass occupies residues 146–167 (VSRFAQYCSLHVSALTLTAIAV). The Cytoplasmic portion of the chain corresponds to 168–186 (DRHQVIMHPLKPRISITKG). The helical transmembrane segment at 187–208 (VIYIAVIWVMATFFSLPHAICQ) threads the bilayer. The Extracellular segment spans residues 209-238 (KLFTFKYSEDIVRSLCLPDFPEPADLFWKY). The chain crosses the membrane as a helical span at residues 239–260 (LDLATFILLYLLPLFIISVAYA). Over 261–293 (RVAKKLWLCNTIGDVTTEQYLALRRKKKTTVKM) the chain is Cytoplasmic. Residues 294–315 (LVLVVVLFALCWFPLNCYVLLL) form a helical membrane-spanning segment. Topologically, residues 316–327 (SSKAIHTNNALY) are extracellular. Residues 328–348 (FAFHWFAMSSTCYNPFIYCWL) traverse the membrane as a helical segment. Residues 349-423 (NENFRVELKA…SSVEPVVAMS (75 aa)) lie on the Cytoplasmic side of the membrane. The segment at 389-423 (SHGRRAPLPNHHLPSSQIQSGKTDLSSVEPVVAMS) is disordered. Over residues 401–414 (LPSSQIQSGKTDLS) the composition is skewed to polar residues.

It belongs to the G-protein coupled receptor 1 family. In terms of tissue distribution, predominantly expressed in the brain, with moderate expression in the hypothalamus. Expressed in the thymus.

The protein resides in the cell membrane. G-protein coupled receptor for PEN, a neuropeptide produced from the precursor protein, proSAAS (encoded by PCSK1N). Acts through a G(i)- and G(q)-alpha-alpha-mediated pathway in response to PEN. Plays a role in food intake and body weight regulation. May contribute to the regulation of anxiety-related behaviors. The protein is G-protein coupled receptor 83 of Mus musculus (Mouse).